A 72-amino-acid chain; its full sequence is Large ribosomal subunit protein bL31c (72 aa).

The protein belongs to the bacterial ribosomal protein bL31 family. Type A subfamily. In terms of assembly, part of the 50S ribosomal subunit.

The protein localises to the plastid. It localises to the chloroplast. Binds the 23S rRNA. The polypeptide is Large ribosomal subunit protein bL31c (rpl31) (Phaeodactylum tricornutum (strain CCAP 1055/1)).